Here is a 92-residue protein sequence, read N- to C-terminus: RIIa domain-containing protein 1 (92 aa).

One can recognise an RIIa domain in the interval 43–77; the sequence is KEVELLISGFFREMFLKRPDNIPEFAADYFTDPRL.

This Bos taurus (Bovine) protein is RIIa domain-containing protein 1 (RIIAD1).